We begin with the raw amino-acid sequence, 116 residues long: MTDKKVTRLRRARKARLKMHELEVVRLCVFRSSQHIYAQVISADGSKVLASASTLDKDLRDGATGNIDAATKVGKLVAERAKAAGVSQVAFDRSGFKYHGRVKALADAAREGGLEF.

This sequence belongs to the universal ribosomal protein uL18 family. In terms of assembly, part of the 50S ribosomal subunit; part of the 5S rRNA/L5/L18/L25 subcomplex. Contacts the 5S and 23S rRNAs.

Its function is as follows. This is one of the proteins that bind and probably mediate the attachment of the 5S RNA into the large ribosomal subunit, where it forms part of the central protuberance. The sequence is that of Large ribosomal subunit protein uL18 from Pseudomonas putida (strain W619).